A 147-amino-acid chain; its full sequence is Plasminogen receptor (KT) (147 aa).

Residues 1 to 52 (MGFIFSKSMNENMKNQQEFMVMHARLQLERQLIMQNEMRERQMAMQIAWSRE) are Extracellular-facing. Residues 53–73 (FLKYFGTFFGIATISLAAGAI) traverse the membrane as a helical segment. Residues 74–78 (KRKKP) are Cytoplasmic-facing. A helical membrane pass occupies residues 79 to 99 (AFLIPIVPLSFIFTYQYDLGY). The Extracellular segment spans residues 100 to 147 (GTLLQRMKSEAEDILETEKTKLELPKGLITFESLEKARREQSKFFSDK).

Interacts with PLAT. Interacts with PLAUR. Expressed in adrenal medulla (pheochromocytoma).

It localises to the cell membrane. In terms of biological role, receptor for plasminogen. Regulates urokinase plasminogen activator-dependent and stimulates tissue-type plasminogen activator-dependent cell surface plasminogen activation. Proposed to be part of a local catecholaminergic cell plasminogen activation system that regulates neuroendocrine prohormone processing. Involved in regulation of inflammatory response; regulates monocyte chemotactic migration and matrix metalloproteinase activation, such as of MMP2 and MMP9. This chain is Plasminogen receptor (KT) (Plgrkt), found in Rattus norvegicus (Rat).